The chain runs to 148 residues: MSGSMSSVFSLLYLLSVCSACYISNCPIGGKRAVQDLPSRQCMSCGPGDRGRCFGPSICCGEGLGCLLGSPETLRCQEEDFLPSPCEAGGKMCGYEGRCAAPGVCCDSEGCSMDQSCVNGDATAFGQPDLLLKLLHLSNHAHPYRLHQ.

A signal peptide spans 1 to 20 (MSGSMSSVFSLLYLLSVCSA). A disulfide bridge connects residues Cys-21 and Cys-26. A Glycine amide modification is found at Gly-29. Disulfide bonds link Cys-42-Cys-86, Cys-45-Cys-59, Cys-53-Cys-76, Cys-60-Cys-66, Cys-93-Cys-105, Cys-99-Cys-117, and Cys-106-Cys-111.

The protein belongs to the vasopressin/oxytocin family.

Isotocin causes contraction of smooth muscles. The sequence is that of Isotocin-neurophysin IT 2 from Catostomus commersonii (White sucker).